A 1664-amino-acid chain; its full sequence is Cortactin-binding protein 2 (1664 aa).

4 disordered regions span residues 1-23 (MATD…AGAA), 268-440 (QLKR…ALHP), 455-479 (GNAN…SPTS), and 495-618 (QALS…KPSI). Positions 119–276 (RKMQERMSTQ…EQLKRGSDSK (158 aa)) form a coiled coil. 2 stretches are compositionally biased toward low complexity: residues 368–379 (SSAPTIPAASAS) and 395–407 (TSST…GTTP). Arg-499 is subject to Asymmetric dimethylarginine. ANK repeat units lie at residues 710–740 (GRPT…DTNY), 744–773 (DGHS…QVNA), 777–806 (NGFT…DVNH), 810–839 (GGQT…DRSI), 843–872 (DGWT…PARG), and 913–943 (EGWT…EPEK). The segment at 871–900 (RGNSSNEEEPESGAFARDGGEESSEGTSEP) is disordered. The segment at 1447-1483 (SKKKGESGAWRKVSTSPRKKSGRFSSPIWNEPDLSPG) is disordered. Residue Ser-1525 is modified to Phosphoserine. The segment at 1558–1664 (RTFHSSGSNP…KHEQVEKPNT (107 aa)) is disordered. The span at 1587 to 1600 (PLSSHQATECSTSK) shows a compositional bias: polar residues. Over residues 1625–1639 (SQNTKRSSSSSNTRQ) the composition is skewed to low complexity. Over residues 1646–1664 (SKEENWNLHKHEQVEKPNT) the composition is skewed to basic and acidic residues.

Interacts with CTTN/cortactin SH3 domain. Interacts with STRN, STRN4/zinedin and MOB4/phocein; this interactions mediate the association with the STRIPAK core complex and may regulate dendritic spine distribution of the STRIPAK complex in hippocampal neurons. Activation of glutamate receptors weakens the interaction with STRN and STRN4.

The protein resides in the cytoplasm. Its subcellular location is the cell cortex. It localises to the cell projection. The protein localises to the dendritic spine. In terms of biological role, regulates the dendritic spine distribution of CTTN/cortactin in hippocampal neurons, and thus controls dendritic spinogenesis and dendritic spine maintenance. Associates with the striatin-interacting phosphatase and kinase (STRIPAK) core complex to regulate dendritic spine distribution of the STRIPAK complex in hippocampal neurons. This Oryctolagus cuniculus (Rabbit) protein is Cortactin-binding protein 2 (CTTNBP2).